Consider the following 193-residue polypeptide: NADH-quinone oxidoreductase subunit B (193 aa).

[4Fe-4S] cluster is bound by residues Cys-72, Cys-73, Cys-137, and Cys-167.

Belongs to the complex I 20 kDa subunit family. NDH-1 is composed of 14 different subunits. Subunits NuoB, C, D, E, F, and G constitute the peripheral sector of the complex. It depends on [4Fe-4S] cluster as a cofactor.

It localises to the cell inner membrane. The catalysed reaction is a quinone + NADH + 5 H(+)(in) = a quinol + NAD(+) + 4 H(+)(out). In terms of biological role, NDH-1 shuttles electrons from NADH, via FMN and iron-sulfur (Fe-S) centers, to quinones in the respiratory chain. The immediate electron acceptor for the enzyme in this species is believed to be ubiquinone. Couples the redox reaction to proton translocation (for every two electrons transferred, four hydrogen ions are translocated across the cytoplasmic membrane), and thus conserves the redox energy in a proton gradient. In Rhizobium rhizogenes (strain K84 / ATCC BAA-868) (Agrobacterium radiobacter), this protein is NADH-quinone oxidoreductase subunit B.